The chain runs to 256 residues: Transmembrane protein 187 (256 aa).

The next 7 helical transmembrane spans lie at 8-28 (ALFHVALASCLCVATVHTGIF), 51-71 (FLAMPFNSLVNMAYVFLGVYW), 94-112 (VFAGMALVYGPVQWLRIGM), 119-139 (VLDQWLTLPIFAWPVAWCLCL), 146-168 (WLFLAVEGLSLCSYSLALLHPHG), 193-213 (NISSGTYLALGVLSCLGFVVL), and 233-253 (FWSKVCDVLQFHFAFLFLTSL).

The protein resides in the membrane. In Bos taurus (Bovine), this protein is Transmembrane protein 187 (TMEM187).